Consider the following 572-residue polypeptide: 3-ketosteroid oxygenase (572 aa).

2 helical membrane passes run 52 to 72 (AFAL…RNFL) and 84 to 104 (YFMR…FIRI).

This sequence belongs to the cytochrome P450 family. As to expression, expressed in the 2 embryonic head hypodermal cells XXXL/R.

The protein localises to the membrane. The enzyme catalyses 5alpha-cholest-7-en-3-one + 3 reduced [NADPH--hemoprotein reductase] + 3 O2 = (25S)-Delta7-dafachronate + 3 oxidized [NADPH--hemoprotein reductase] + 4 H2O + 4 H(+). It carries out the reaction cholest-4-en-3-one + 3 reduced [NADPH--hemoprotein reductase] + 3 O2 = (25S)-3-oxocholest-4-en-26-oate + 3 oxidized [NADPH--hemoprotein reductase] + 4 H2O + 4 H(+). It functions in the pathway steroid hormone biosynthesis; dafachronic acid biosynthesis. Its function is as follows. Converts the 3-keto steroids 4-cholesten-3-one and lathosterone into the carboxylic metabolites 3-keto-4-cholestenate (Delta(4)-dafachronic acid, Delta(4)-DA) and 3-keto-7,(5a)-cholestenate (Delta(7)-dafachronic acid, Delta(7)-DA) respectively, by catalyzing successive oxidations at C-26. Dafachronic acids bind directly to the nuclear hormone receptor (NHR) DAF-12, suppressing dauer formation and inducing reproductive growth. In a non-cell autonomous manner, negatively regulates body wall muscle arm extensions to motor neurons probably by preventing daf-12 isoform b activation. May be involved in thermotolerance. In Caenorhabditis elegans, this protein is 3-ketosteroid oxygenase (daf-9).